The following is a 524-amino-acid chain: Lysine--tRNA ligase (524 aa).

2 residues coordinate Mg(2+): Glu-433 and Glu-440.

It belongs to the class-II aminoacyl-tRNA synthetase family. Homodimer. Mg(2+) serves as cofactor.

It localises to the cytoplasm. The enzyme catalyses tRNA(Lys) + L-lysine + ATP = L-lysyl-tRNA(Lys) + AMP + diphosphate. This is Lysine--tRNA ligase from Colwellia psychrerythraea (strain 34H / ATCC BAA-681) (Vibrio psychroerythus).